Here is a 77-residue protein sequence, read N- to C-terminus: Small ribosomal subunit protein bS20 (77 aa).

This sequence belongs to the bacterial ribosomal protein bS20 family.

Binds directly to 16S ribosomal RNA. In Streptococcus agalactiae serotype Ia (strain ATCC 27591 / A909 / CDC SS700), this protein is Small ribosomal subunit protein bS20.